A 350-amino-acid chain; its full sequence is Anthranilate phosphoribosyltransferase (350 aa).

5-phospho-alpha-D-ribose 1-diphosphate-binding positions include glycine 81, glycine 84–aspartate 85, threonine 89, asparagine 91–threonine 94, lysine 109–serine 117, and serine 121. An anthranilate-binding site is contributed by glycine 81. Serine 93 is a Mg(2+) binding site. Arginine 167 serves as a coordination point for anthranilate. Mg(2+) is bound by residues aspartate 230 and glutamate 231.

It belongs to the anthranilate phosphoribosyltransferase family. As to quaternary structure, homodimer. It depends on Mg(2+) as a cofactor.

The catalysed reaction is N-(5-phospho-beta-D-ribosyl)anthranilate + diphosphate = 5-phospho-alpha-D-ribose 1-diphosphate + anthranilate. The protein operates within amino-acid biosynthesis; L-tryptophan biosynthesis; L-tryptophan from chorismate: step 2/5. Catalyzes the transfer of the phosphoribosyl group of 5-phosphorylribose-1-pyrophosphate (PRPP) to anthranilate to yield N-(5'-phosphoribosyl)-anthranilate (PRA). This chain is Anthranilate phosphoribosyltransferase, found in Nitrosospira multiformis (strain ATCC 25196 / NCIMB 11849 / C 71).